Consider the following 209-residue polypeptide: Phosphoheptose isomerase (209 aa).

The SIS domain maps to 50-209 (IAETFRNGGK…ELVESMMGYA (160 aa)). Substrate is bound at residue 65 to 67 (NGG). The Zn(2+) site is built by histidine 74 and glutamate 78. Substrate contacts are provided by residues glutamate 78, 109–110 (ND), 135–137 (STS), serine 140, and glutamine 188. 2 residues coordinate Zn(2+): glutamine 188 and histidine 196.

It belongs to the SIS family. GmhA subfamily. Requires Zn(2+) as cofactor.

The protein resides in the cytoplasm. It catalyses the reaction 2 D-sedoheptulose 7-phosphate = D-glycero-alpha-D-manno-heptose 7-phosphate + D-glycero-beta-D-manno-heptose 7-phosphate. The protein operates within carbohydrate biosynthesis; D-glycero-D-manno-heptose 7-phosphate biosynthesis; D-glycero-alpha-D-manno-heptose 7-phosphate and D-glycero-beta-D-manno-heptose 7-phosphate from sedoheptulose 7-phosphate: step 1/1. In terms of biological role, catalyzes the isomerization of sedoheptulose 7-phosphate in D-glycero-D-manno-heptose 7-phosphate. The chain is Phosphoheptose isomerase from Chlorobaculum parvum (strain DSM 263 / NCIMB 8327) (Chlorobium vibrioforme subsp. thiosulfatophilum).